Reading from the N-terminus, the 987-residue chain is Vacuolar membrane protease (987 aa).

Topologically, residues 1-14 (MATRKARNPLAFMP) are cytoplasmic. The chain crosses the membrane as a helical span at residues 15–35 (WPVTILTTAMYLALIIPLLVI). Residues 36 to 384 (HHNVPPAPRT…AFAVFRLHTL (349 aa)) are Vacuolar-facing. Residues N51 and N117 are each glycosylated (N-linked (GlcNAc...) asparagine). Residues H167 and D179 each coordinate Zn(2+). Residue E213 is the Proton acceptor of the active site. Zn(2+)-binding residues include E214, E239, and H312. A helical membrane pass occupies residues 385 to 405 (FALSVTLLIVAPLTLLVTSVI). Over 406–435 (LSRADKMYLFRSSVYSEINDDYIPLRGLRG) the chain is Cytoplasmic. The chain crosses the membrane as a helical span at residues 436–456 (FFRFPFLISIPTGVTVGLAYM). Topologically, residues 457-466 (VTKVNPFIAH) are vacuolar. The helical transmembrane segment at 467–487 (SSSYAVWSMMISAWIFLAWFV) threads the bilayer. The Cytoplasmic portion of the chain corresponds to 488–501 (SRVANSARPSAFHR). A helical membrane pass occupies residues 502-522 (VYTWTWMFVLTWSLMVVCTVY). The Vacuolar segment spans residues 523–526 (EHEE). A helical transmembrane segment spans residues 527-547 (GLAGGYFIFFYFAGTFLATWI). Residues 548-649 (SYLELFALPT…WSGVLPRWTW (102 aa)) lie on the Cytoplasmic side of the membrane. The disordered stretch occupies residues 572 to 600 (STQGSRLAASGDEHQDDAAEEDPTESTSL). The chain crosses the membrane as a helical span at residues 650–670 (LLQLLITAPVILMLIVPLALL). Topologically, residues 671 to 686 (TTSALSQTGQDGSPQL) are vacuolar. A helical transmembrane segment spans residues 687 to 707 (LIYLFISCLTALLFAPMLPFI). Residues 708 to 715 (HRYTYHLP) lie on the Cytoplasmic side of the membrane. A helical membrane pass occupies residues 716-736 (IFLLFVFIGTMIYNLVAFPFA). The Vacuolar segment spans residues 737–987 (DSNRLKLFFL…KRSSLGALGS (251 aa)). N781 and N871 each carry an N-linked (GlcNAc...) asparagine glycan.

The protein belongs to the peptidase M28 family. The cofactor is Zn(2+).

The protein resides in the vacuole membrane. May be involved in vacuolar sorting and osmoregulation. The protein is Vacuolar membrane protease of Penicillium rubens (strain ATCC 28089 / DSM 1075 / NRRL 1951 / Wisconsin 54-1255) (Penicillium chrysogenum).